Reading from the N-terminus, the 1028-residue chain is Collagen alpha-1(VI) chain (1028 aa).

A signal peptide spans 1–19 (MRAARALLPLLLQACWTAA). The N-terminal globular domain stretch occupies residues 20-256 (QDEPETPRAV…CCSFECQPAR (237 aa)). In terms of domain architecture, VWFA 1 spans 37–235 (DLFFVLDTSE…EAISQTIDTI (199 aa)). Residue asparagine 212 is glycosylated (N-linked (GlcNAc...) asparagine). The tract at residues 254 to 590 (PARGPPGLRG…GPPGHQGPPG (337 aa)) is disordered. Residues 257-592 (GPPGLRGDPG…PGHQGPPGPD (336 aa)) are triple-helical region. Residues 262-264 (RGD) carry the Cell attachment site motif. 2 stretches are compositionally biased toward basic and acidic residues: residues 268 to 285 (EGER…EAGD) and 301 to 334 (KGEK…DGVK). The span at 384–394 (RPGSSGPSGDE) shows a compositional bias: low complexity. Residues 442 to 444 (RGD) carry the Cell attachment site motif. Over residues 457 to 471 (EGPVGVPGDPGEAGP) the composition is skewed to low complexity. The Cell attachment site signature appears at 478 to 480 (RGD). Residues 483-493 (PPGSEGARGAP) show a composition bias toward low complexity. Residues asparagine 516 and asparagine 537 are each glycosylated (N-linked (GlcNAc...) asparagine). Acidic residues predominate over residues 550 to 560 (GEAGDPGDDNN). Pro residues predominate over residues 579–590 (PQGPPGHQGPPG). The tract at residues 593–1028 (ECEILDIIMK…QTVSRKVALG (436 aa)) is C-terminal globular domain. 2 VWFA domains span residues 615 to 805 (DLLF…LKNV) and 829 to 1021 (DITI…HQTV). 2 N-linked (GlcNAc...) asparagine glycosylation sites follow: asparagine 804 and asparagine 896.

It belongs to the type VI collagen family. Trimers composed of three different chains: alpha-1(VI), alpha-2(VI), and alpha-3(VI) or alpha-5(VI) or alpha-6(VI). Prolines at the third position of the tripeptide repeating unit (G-X-Y) are hydroxylated in some or all of the chains.

Its subcellular location is the secreted. It localises to the extracellular space. The protein resides in the extracellular matrix. Its function is as follows. Collagen VI acts as a cell-binding protein. The protein is Collagen alpha-1(VI) chain (COL6A1) of Homo sapiens (Human).